A 197-amino-acid chain; its full sequence is Small ribosomal subunit protein uS11m (197 aa).

Basic and acidic residues predominate over residues 43–52; it reads AAKEEVEKAE. The interval 43–66 is disordered; sequence AAKEEVEKAETPAPAPSRSSFSIY.

The protein belongs to the universal ribosomal protein uS11 family. In terms of assembly, component of the mitochondrial ribosome small subunit (28S) which comprises a 12S rRNA and about 30 distinct proteins.

It localises to the mitochondrion. The polypeptide is Small ribosomal subunit protein uS11m (MRPS11) (Bos taurus (Bovine)).